The primary structure comprises 713 residues: MPHSVLARLPPGSVRLVAAFGLLLLVSLLVLHRRPGRPHVAAAAASDRLTDPSRSRLFLSQSPGANASIAADLRALTAGPHLAGTPASAGAAAHVLARLRAAGLQTLTREYEPLLSYPGHASLALLRPDGSLLARLSLEEPADEGRRVVPPYHAYAPSGGAVAEAVFVNLGREEDYVVLERLGVGVRGRVAVARRGGGYRGGVVARAADKGAVAVLIAGNADGGVERGVVLLGGPGDPLTPGWAATSGAERLKFDDKAVKQRFPSIPSMPVSAKTAAAIIRSLGGPAIPAEWKDGLGVDTGGLGPGPTLVNFTYQEDRKFYKIRDIFGIIKGQEEPDRYVILGNHRDAWTYGAVDPNSGTAALLDIARRLGIMLQSGWKPRRSIILCSWDGEEFGMIGSTEWVEDNLEDLHSKAVAYLNVDCAVQGVGFFAGSTPQLDKLLVDITRQVRDPDVTGKMVHDTWNEMSGGIKIERLARTDSDFAPFLHHAGIPSVDLYYGEEFPGYHTALDTYNWMEKHGDPFFLRHLAITEIWGLLALRLANDPVLPFDYQAYTSQLQEHIKTLSALTSNGHAVNLMNGCVNDLSGAAMEVLKEMKKLQQMDLYDEHARMRRRLLNDRLLLAERSFLQPEGLQGRGWFKHLLYSPPEDYESKLSFFPGIADAISRSANLSDKEQEVAMQHEVWKVCRAIQRAASVLRGEFSEQKPTNFSSLVTP.

Residues 1–10 (MPHSVLARLP) lie on the Cytoplasmic side of the membrane. A helical; Signal-anchor for type II membrane protein membrane pass occupies residues 11–31 (PGSVRLVAAFGLLLLVSLLVL). Topologically, residues 32–713 (HRRPGRPHVA…PTNFSSLVTP (682 aa)) are extracellular. N66 and N311 each carry an N-linked (GlcNAc...) asparagine glycan. The segment at 245–539 (ATSGAERLKF…EIWGLLALRL (295 aa)) is catalytic. Residues H345 and D355 each contribute to the Zn(2+) site. Catalysis depends on E392, which acts as the Nucleophile. Zn(2+)-binding residues include E393, D421, and H505. N-linked (GlcNAc...) asparagine glycans are attached at residues N667 and N706.

This sequence belongs to the peptidase M28 family. M28B subfamily. Zn(2+) is required as a cofactor.

It is found in the cell membrane. It carries out the reaction Release of an unsubstituted, C-terminal glutamyl residue, typically from Ac-Asp-Glu or folylpoly-gamma-glutamates.. In terms of biological role, involved in the regulation of meristem development and seed maturation processes. Mediates regulation of embryonic regulatory genes and genes controlling abscisic acid (ABA) biosynthesis and turnover in developing seeds. May be required for the synthesis of small signaling molecules that integrates meristem and embryo formation in seeds. The polypeptide is Probable glutamate carboxypeptidase VP8 (Zea mays (Maize)).